Here is a 687-residue protein sequence, read N- to C-terminus: MADLLIELFSEEIPARMQARAGEDLKKRMTDGLVEAGLTYAGAHALTTPRRLTLAIEGLLDHSPTVREERKGPKVGAPEKAIEGFLRGAGLTRDQLEERDTPKGAVYFATIEKPGRPAAEIIAEVLEDTIRNFPWPKSMRWGAGALRWVRPLHSILCLLTREEGSEVVPLEIDGVTSGDSTAGHRFMAPARFAVTGFEDYAAKLKRAFVVLDPKEREAAIWQDATNQAFASGLEVVDDKGLLAEVAGLVEWPVVLMGSIDAEFLDLPPEVLQTSMKEHQKFFSVKNPKTGRIEKFITVANRETADNGATILAGNQKVLSARLADAKFFWENDLRIAKSEVGVEGWLESLGNVTFHNKLGTQAARIDRIAALAREIAPVVGADADLAEQAAKVAKADLSSEMVYEFPELQGLMGRYYAQAAGLPQEVANACELHYSPLGPSDDVPTEPVSVAVALADKIDTLTGFWAIDEKPTGSKDPYALRRAALGVIRLVLSNDVRVGLKEVFAKAYEGADGSDLLSFFHDRLKVFLRDQGIRHDVIDACIAMEGSDDLTLLVKRARALEDFMKSEDGENLLQGFKRANNILSQAEEKDGVEYSFGADKKFVEDPAEAALFEALAANEAAISTAIEAEDFAAAMGGMAALRAPVDAFFEAVQVNSDNPVVRRNRLNLLSQIRKVCGQVADLSRIEG.

This sequence belongs to the class-II aminoacyl-tRNA synthetase family. As to quaternary structure, tetramer of two alpha and two beta subunits.

It localises to the cytoplasm. The catalysed reaction is tRNA(Gly) + glycine + ATP = glycyl-tRNA(Gly) + AMP + diphosphate. The polypeptide is Glycine--tRNA ligase beta subunit (Ruegeria sp. (strain TM1040) (Silicibacter sp.)).